Reading from the N-terminus, the 165-residue chain is 3-isopropylmalate dehydratase small subunit (165 aa).

The protein belongs to the LeuD family. LeuD type 2 subfamily. In terms of assembly, heterodimer of LeuC and LeuD.

It carries out the reaction (2R,3S)-3-isopropylmalate = (2S)-2-isopropylmalate. Its pathway is amino-acid biosynthesis; L-leucine biosynthesis; L-leucine from 3-methyl-2-oxobutanoate: step 2/4. Functionally, catalyzes the isomerization between 2-isopropylmalate and 3-isopropylmalate, via the formation of 2-isopropylmaleate. This Saccharolobus islandicus (strain Y.G.57.14 / Yellowstone #1) (Sulfolobus islandicus) protein is 3-isopropylmalate dehydratase small subunit.